We begin with the raw amino-acid sequence, 899 residues long: Linoleate 13S-lipoxygenase 2-1, chloroplastic (899 aa).

The transit peptide at 1-40 (MLKPQLQQSSQSTKALIPSWNTNPLFLASFPINILNKNFR) directs the protein to the chloroplast. Positions 78–200 (VQKQVNLNLS…DNPDKRIFFT (123 aa)) constitute a PLAT domain. The 697-residue stretch at 203-899 (SYLPSQTPSG…GKGVPYSISI (697 aa)) folds into the Lipoxygenase domain. The segment at 252 to 287 (SNNDDAKRPVLGGKELPYPRRCKTGRPRSKKDPLSE) is disordered. Residues 271-280 (RRCKTGRPRS) show a composition bias toward basic residues. Fe cation is bound by residues His557, His562, His749, Asn753, and Ile899.

It belongs to the lipoxygenase family. As to quaternary structure, monomer. Fe cation is required as a cofactor. In terms of tissue distribution, expressed in leaves and floral buds.

Its subcellular location is the plastid. It is found in the chloroplast stroma. The protein localises to the chloroplast thylakoid. The catalysed reaction is (9Z,12Z)-octadecadienoate + O2 = (13S)-hydroperoxy-(9Z,11E)-octadecadienoate. The enzyme catalyses (9Z,12Z,15Z)-octadecatrienoate + O2 = (13S)-hydroperoxy-(9Z,11E,15Z)-octadecatrienoate. Its pathway is lipid metabolism; oxylipin biosynthesis. In terms of biological role, plant lipoxygenase involved in a number of diverse aspects of plant physiology including growth and development, pest resistance, and senescence. May not be involved in the bulk production of jasmonate upon wounding. Catalyzes the hydroperoxidation of lipids containing a cis,cis-1,4-pentadiene structure. Linolenic acid is the preferred substrate, before linoleic and arachidonic acids. Also has some activity with phosphatidylglycerol, but not with galactolipids. The protein is Linoleate 13S-lipoxygenase 2-1, chloroplastic of Solanum tuberosum (Potato).